Consider the following 426-residue polypeptide: MTKFETVRGMKDYIGIDAEKIRYLESTFRDLAIKYGYSEIITPVVEEFKLFALKGGEELRETMYVFKDKADRELSLRPEITPSVARAYIQNLQSSPKPIRLFYFGTVYRYDEPQYGRYREFRQAGIEMIGDSSILADLEVLDLLYNFYDKLNLSNDITIKINNIGIFRKIMDKYNIEDNLQEHILHLIDKNKINEALDILEKNLKNKDIIDFFYKILTKKDTKLEDIESLAELEEVSRLDIKSEFLYLFRLSRILSDLNIKFKIDLGFVRGLAYYTGLIFEVLHPSVQFSIAGGGRYDKLIELYGGLPSPAIGFAIGVERTLLVIKDLKVEEPVNVIVIGMSEDTIPSMFMVSRILRKEEYKVVINTKDQPLSKLLPYYASQGFKVAIIIGKQELEKNMITVRNLITRKQISVPLENIEDAIKQTL.

This sequence belongs to the class-II aminoacyl-tRNA synthetase family.

It is found in the cytoplasm. The enzyme catalyses tRNA(His) + L-histidine + ATP = L-histidyl-tRNA(His) + AMP + diphosphate + H(+). This chain is Histidine--tRNA ligase, found in Saccharolobus islandicus (strain Y.N.15.51 / Yellowstone #2) (Sulfolobus islandicus).